The chain runs to 76 residues: MFTMKKSLLLLFFLGTISLSLCEEERSADEDDGEKGVKRGIFSLIKTAAKFVGKNLLKQAGKAGVEHLACKANNQC.

Positions 1–22 are cleaved as a signal peptide; it reads MFTMKKSLLLLFFLGTISLSLC. Positions 23 to 39 are excised as a propeptide; the sequence is EEERSADEDDGEKGVKR. Cysteine 70 and cysteine 76 are oxidised to a cystine.

In terms of tissue distribution, expressed by the skin glands.

The protein localises to the secreted. In terms of biological role, antimicrobial peptide with activity against Gram-positive and Gram-negative bacteria and against fungi. Has been tested against S.aureus (MIC=1.25 ug/mL), B.pumilus (MIC=2.5 ug/mL), B.cereus (MIC=7.5 ug/mL), E.coli (MIC=12.5 ug/mL), B.dysenteriae (MIC=7.5 ug/mL), A.cacoaceticus (MIC=12.5 ug/mL), P.aeruginosa (MIC=50.0 ug/mL) and C.albicans (MIC=2.5 ug/mL). Also shows a weak hemolytic activity. This Amolops loloensis (Lolokou Sucker Frog) protein is Esculentin-2-ALb.